We begin with the raw amino-acid sequence, 443 residues long: Histidinol dehydrogenase (443 aa).

The NAD(+) site is built by tyrosine 127, glutamine 185, and asparagine 208. The substrate site is built by serine 234, glutamine 256, and histidine 259. Residues glutamine 256 and histidine 259 each coordinate Zn(2+). Catalysis depends on proton acceptor residues glutamate 323 and histidine 324. 4 residues coordinate substrate: histidine 324, aspartate 357, glutamate 411, and histidine 416. Aspartate 357 is a binding site for Zn(2+). Residue histidine 416 coordinates Zn(2+).

This sequence belongs to the histidinol dehydrogenase family. Zn(2+) serves as cofactor.

It carries out the reaction L-histidinol + 2 NAD(+) + H2O = L-histidine + 2 NADH + 3 H(+). Its pathway is amino-acid biosynthesis; L-histidine biosynthesis; L-histidine from 5-phospho-alpha-D-ribose 1-diphosphate: step 9/9. Its function is as follows. Catalyzes the sequential NAD-dependent oxidations of L-histidinol to L-histidinaldehyde and then to L-histidine. This chain is Histidinol dehydrogenase, found in Photobacterium profundum (strain SS9).